We begin with the raw amino-acid sequence, 443 residues long: Arginine biosynthesis bifunctional protein ArgJ, mitochondrial (443 aa).

Substrate contacts are provided by threonine 179, lysine 206, threonine 217, glutamate 303, asparagine 438, and serine 443. Threonine 217 functions as the Nucleophile in the catalytic mechanism.

Belongs to the ArgJ family. Heterodimer of an alpha and a beta chain. In terms of processing, the alpha and beta chains are autoproteolytically processed from a single precursor protein within the mitochondrion.

It is found in the mitochondrion matrix. It catalyses the reaction N(2)-acetyl-L-ornithine + L-glutamate = N-acetyl-L-glutamate + L-ornithine. It carries out the reaction L-glutamate + acetyl-CoA = N-acetyl-L-glutamate + CoA + H(+). Its pathway is amino-acid biosynthesis; L-arginine biosynthesis; L-ornithine and N-acetyl-L-glutamate from L-glutamate and N(2)-acetyl-L-ornithine (cyclic): step 1/1. It participates in amino-acid biosynthesis; L-arginine biosynthesis; N(2)-acetyl-L-ornithine from L-glutamate: step 1/4. Catalyzes two activities which are involved in the cyclic version of arginine biosynthesis: the synthesis of acetylglutamate from glutamate and acetyl-CoA, and of ornithine by transacetylation between acetylornithine and glutamate. This is Arginine biosynthesis bifunctional protein ArgJ, mitochondrial from Eremothecium gossypii (strain ATCC 10895 / CBS 109.51 / FGSC 9923 / NRRL Y-1056) (Yeast).